A 325-amino-acid polypeptide reads, in one-letter code: Lipoyl synthase (325 aa).

[4Fe-4S] cluster contacts are provided by Cys72, Cys77, Cys83, Cys98, Cys102, Cys105, and Ser312. A Radical SAM core domain is found at 84–301 (FAGGTATFMI…AEEGERMGFK (218 aa)).

Belongs to the radical SAM superfamily. Lipoyl synthase family. [4Fe-4S] cluster serves as cofactor.

It localises to the cytoplasm. The enzyme catalyses [[Fe-S] cluster scaffold protein carrying a second [4Fe-4S](2+) cluster] + N(6)-octanoyl-L-lysyl-[protein] + 2 oxidized [2Fe-2S]-[ferredoxin] + 2 S-adenosyl-L-methionine + 4 H(+) = [[Fe-S] cluster scaffold protein] + N(6)-[(R)-dihydrolipoyl]-L-lysyl-[protein] + 4 Fe(3+) + 2 hydrogen sulfide + 2 5'-deoxyadenosine + 2 L-methionine + 2 reduced [2Fe-2S]-[ferredoxin]. Its pathway is protein modification; protein lipoylation via endogenous pathway; protein N(6)-(lipoyl)lysine from octanoyl-[acyl-carrier-protein]: step 2/2. Its function is as follows. Catalyzes the radical-mediated insertion of two sulfur atoms into the C-6 and C-8 positions of the octanoyl moiety bound to the lipoyl domains of lipoate-dependent enzymes, thereby converting the octanoylated domains into lipoylated derivatives. This chain is Lipoyl synthase, found in Azotobacter vinelandii (strain DJ / ATCC BAA-1303).